Consider the following 521-residue polypeptide: Phosphoethanolamine transferase EptA (521 aa).

Transmembrane regions (helical) follow at residues 18-38 (AGLL…FVYV), 47-67 (FIAM…LALG), 79-99 (IVFS…KVFL), 118-138 (FLSV…GYVI), 150-170 (APFL…LANT), and 182-202 (FIGG…VSAL).

It belongs to the phosphoethanolamine transferase family. EptA subfamily.

It localises to the cell inner membrane. The protein operates within bacterial outer membrane biogenesis; LPS lipid A biosynthesis. Probably catalyzes the addition of a phosphoethanolamine moiety to the dephosphorylated 1-position of the disaccharide backbone of lipid A. Lipid A that is 1-phosphorylated is not a substrate for this enzyme. In Helicobacter pylori (strain ATCC 700392 / 26695) (Campylobacter pylori), this protein is Phosphoethanolamine transferase EptA.